The following is a 93-amino-acid chain: Auxin-responsive protein SAUR26 (93 aa).

It belongs to the ARG7 family. Interacts with PP2C-D1. Higher expression in thermo-responsive cultivars (e.g. cv. Alst-1, cv. Ang-0 and cv. Com-0) than in low thermo-responsive cultivars (e.g. cv. Dja-1, cv. El-0 and cv. Kon).

It is found in the cell membrane. In terms of biological role, provide a mechanistic link between auxin and plasma membrane H(+)-ATPases (PM H(+)-ATPases, e.g. AHA1 and AHA2), and triggers PM H(+)-ATPases activity by promoting phosphorylation of their C-terminal autoinhibitory domain as a result of PP2C-D subfamily of type 2C phosphatases inhibition, thus leading to the acidification of the apoplast and the facilitation of solutes and water uptake to drive cell expansion. Functions as a positive effectors of cell expansion through modulation of auxin transport. Involved in thermo-responsiveness of plant architecture. Enhances plasma membrane H(+)-ATPase. Probably involved in light intensity mediated root development. The protein is Auxin-responsive protein SAUR26 of Arabidopsis thaliana (Mouse-ear cress).